Reading from the N-terminus, the 231-residue chain is MVKLVFARHGESEWNKANLFTGWADVDLSEKGTQQAIDAGKLIKEAGIEFDLAFTSVLTRAIKTTNLALENAGQLWVPTEKSWRLNERHYGALTGKNKAEAAEQFGDEQVHIWRRSYDVLPPAMAKDDEYSAHKDRRYADLDPALIPDAENLKVTLERAMPYWEEKIAPALLDGKNVFVGAHGNSIRALVKHIKGLSDDEIMDVEIPNFPPLVFELDEKLNIVKEYYLGGE.

Residues 8 to 15, 21 to 22, arginine 60, 87 to 90, lysine 98, 114 to 115, and 183 to 184 contribute to the substrate site; these read RHGESEWN, TG, ERHY, RR, and GN. Histidine 9 serves as the catalytic Tele-phosphohistidine intermediate. Residue glutamate 87 is the Proton donor/acceptor of the active site.

It belongs to the phosphoglycerate mutase family. BPG-dependent PGAM subfamily.

The catalysed reaction is (2R)-2-phosphoglycerate = (2R)-3-phosphoglycerate. The protein operates within carbohydrate degradation; glycolysis; pyruvate from D-glyceraldehyde 3-phosphate: step 3/5. Catalyzes the interconversion of 2-phosphoglycerate and 3-phosphoglycerate. The polypeptide is 2,3-bisphosphoglycerate-dependent phosphoglycerate mutase (Streptococcus pyogenes serotype M49 (strain NZ131)).